An 882-amino-acid polypeptide reads, in one-letter code: Protein translocase subunit SecA (882 aa).

ATP-binding positions include Gln79, 97–101, and Asp487; that span reads GEGKT.

Belongs to the SecA family.

It is found in the plastid. The protein localises to the chloroplast stroma. Its subcellular location is the chloroplast thylakoid membrane. It carries out the reaction ATP + H2O + cellular proteinSide 1 = ADP + phosphate + cellular proteinSide 2.. Has a central role in coupling the hydrolysis of ATP to the transfer of proteins across the thylakoid membrane. The polypeptide is Protein translocase subunit SecA (Gracilaria tenuistipitata var. liui (Red alga)).